Consider the following 476-residue polypeptide: Angiotensinogen (476 aa).

An N-terminal signal peptide occupies residues 1–24 (MAPAGVSLRATILCLLAWAGLAAG). Position 25 is a beta-decarboxylated aspartate; in form angiotensin-A (Asp25). N-linked (GlcNAc...) asparagine glycosylation is found at Asn38, Asn161, Asn295, and Asn319. Cysteines 42 and 162 form a disulfide.

This sequence belongs to the serpin family. In terms of assembly, during pregnancy, exists as a disulfide-linked 2:2 heterotetramer with the proform of PRG2 and as a complex (probably a 2:2:2 heterohexamer) with pro-PRG2 and C3dg. Post-translationally, beta-decarboxylation of Asp-25 in angiotensin-2, by mononuclear leukocytes produces alanine. The resulting peptide form, angiotensin-A, has the same affinity for the AT1 receptor as angiotensin-2, but a higher affinity for the AT2 receptor. In response to low blood pressure, the enzyme renin/REN cleaves angiotensinogen to produce angiotensin-1. Angiotensin-1 is a substrate of ACE (angiotensin converting enzyme) that removes a dipeptide to yield the physiologically active peptide angiotensin-2. Angiotensin-1 and angiotensin-2 can be further processed to generate angiotensin-3, angiotensin-4. Angiotensin 1-9 is cleaved from angiotensin-1 by ACE2 and can be further processed by ACE to produce angiotensin 1-7, angiotensin 1-5 and angiotensin 1-4. Angiotensin 1-7 has also been proposed to be cleaved from angiotensin-2 by ACE2 or from angiotensin-1 by MME (neprilysin). In terms of processing, the disulfide bond is labile. Angiotensinogen is present in the circulation in a near 40:60 ratio with the oxidized disulfide-bonded form, which preferentially interacts with receptor-bound renin. As to expression, expressed by the liver and secreted in plasma.

It localises to the secreted. In terms of biological role, essential component of the renin-angiotensin system (RAS), a potent regulator of blood pressure, body fluid and electrolyte homeostasis. Acts directly on vascular smooth muscle as a potent vasoconstrictor, affects cardiac contractility and heart rate through its action on the sympathetic nervous system, and alters renal sodium and water absorption through its ability to stimulate the zona glomerulosa cells of the adrenal cortex to synthesize and secrete aldosterone. Acts by binding to angiotensin receptors AGTR1 and AGTR2. Also binds the DEAR/FBXW7-AS1 receptor. Its function is as follows. Stimulates aldosterone release. Functionally, is a ligand for the G-protein coupled receptor MAS1. Has vasodilator and antidiuretic effects. Has an antithrombotic effect that involves MAS1-mediated release of nitric oxide from platelets. The chain is Angiotensinogen from Homo sapiens (Human).